Reading from the N-terminus, the 357-residue chain is Gene 58 protein (357 aa).

This sequence belongs to the herpesviridae BMRF2 family.

The sequence is that of Gene 58 protein (58) from Saimiri sciureus (Common squirrel monkey).